The chain runs to 1261 residues: AT-rich interactive domain-containing protein 4A (1261 aa).

A DNA-binding region spans residues 4–121 (ADEPAYLTVG…RHFAESETLD (118 aa)). 3 disordered regions span residues 142–169 (RGRR…DKRR), 273–310 (ESSS…LDPE), and 435–470 (APEM…PRGR). 2 stretches are compositionally biased toward acidic residues: residues 151 to 165 (TEDE…EEDE) and 276 to 289 (SSDD…EHEE). Residues 290–299 (EKEKEAKKEE) are compositionally biased toward basic and acidic residues. Residues 300–310 (EELPEEELDPE) show a composition bias toward acidic residues. One can recognise an ARID domain in the interval 309–401 (PEERDNFLQQ…YLYGFEEYCR (93 aa)). Residue K481 forms a Glycyl lysine isopeptide (Lys-Gly) (interchain with G-Cter in SUMO2) linkage. Disordered regions lie at residues 498-582 (LENK…GTKV), 633-768 (WPLD…EAGD), and 842-953 (FSST…EDAM). Basic and acidic residues predominate over residues 512 to 522 (PAAKREHELLF). The span at 526–536 (STPKNKEKKIK) shows a compositional bias: basic residues. Positions 541 to 551 (SERDSDEEEEK) are enriched in acidic residues. Positions 552–564 (SQEREETESRCDS) are enriched in basic and acidic residues. A compositionally biased stretch (acidic residues) spans 565–574 (EGEDEEDDTE). One can recognise a Tudor-knot domain in the interval 579-631 (GTKVKVKYGRGKTQKIYEASIKSTEMDDGEILYLVHYYGWNVRYDEWVKADRI). Residues 640-649 (PKKKQKKKVK) are compositionally biased toward basic residues. Positions 650–665 (NKEDSEKDEKRDEERQ) are enriched in basic and acidic residues. The span at 676 to 689 (STFSPNMPYSLSKT) shows a compositional bias: polar residues. A Phosphoserine modification is found at S679. The segment covering 690-702 (SNSEGKSDSCSSD) has biased composition (low complexity). The span at 708-753 (QLEKSSGGEDLSPDVKEELEKNENAHDDKLDEENPKIVHISKENDR) shows a compositional bias: basic and acidic residues. S719 is subject to Phosphoserine. Residues K723 and K743 each participate in a glycyl lysine isopeptide (Lys-Gly) (interchain with G-Cter in SUMO2) cross-link. A Phosphoserine modification is found at S867. 2 stretches are compositionally biased toward basic and acidic residues: residues 899–909 (KGAHVEQHFET) and 929–947 (TSEK…TPLK). Residues 955-968 (LIGPETLVCHEVDL) are retinoblastoma protein binding. A compositionally biased stretch (basic and acidic residues) spans 1067-1080 (HERESREKGQKRPS). Disordered regions lie at residues 1067–1173 (HERE…RTYK) and 1216–1261 (RRRK…VECR). A phosphoserine mark is found at S1113 and S1149. Positions 1230 to 1252 (HAGASMSSASSDTGMSPSSSSPP) are enriched in low complexity.

In terms of assembly, identified in mSin3A corepressor complexes together with SIN3A, SIN3B, RBBP4, RBBP7, SAP30, BRMS1, HDAC1 and HDAC2. Interacts with BRMS1. Interacts with RB1. Interacts with ARID4B. Interacts with AR. As to expression, expressed in Sertoli cells of the testis.

The protein resides in the nucleus. DNA-binding protein which modulates activity of several transcription factors including RB1 (retinoblastoma-associated protein) and AR (androgen receptor). May function as part of an mSin3A repressor complex. Has no intrinsic transcriptional activity. Plays a role in the regulation of epigenetic modifications at the PWS/AS imprinting center near the SNRPN promoter, where it might function as part of a complex with RB1 and ARID4B. Involved in spermatogenesis, together with ARID4B, where it acts as a transcriptional coactivator for AR and enhances expression of genes required for sperm maturation. Regulates expression of the tight junction protein CLDN3 in the testis, which is important for integrity of the blood-testis barrier. Plays a role in myeloid homeostasis where it regulates the histone methylation state of bone marrow cells and expression of various genes involved in hematopoiesis. May function as a leukemia suppressor. The sequence is that of AT-rich interactive domain-containing protein 4A from Mus musculus (Mouse).